The following is a 360-amino-acid chain: Peptide chain release factor 1 (360 aa).

Gln235 is subject to N5-methylglutamine.

The protein belongs to the prokaryotic/mitochondrial release factor family. Methylated by PrmC. Methylation increases the termination efficiency of RF1.

It is found in the cytoplasm. Functionally, peptide chain release factor 1 directs the termination of translation in response to the peptide chain termination codons UAG and UAA. The protein is Peptide chain release factor 1 of Burkholderia cenocepacia (strain ATCC BAA-245 / DSM 16553 / LMG 16656 / NCTC 13227 / J2315 / CF5610) (Burkholderia cepacia (strain J2315)).